The following is an 888-amino-acid chain: DNA mismatch repair protein MutS (888 aa).

641-648 (GPNMAGKS) lines the ATP pocket.

The protein belongs to the DNA mismatch repair MutS family.

Its function is as follows. This protein is involved in the repair of mismatches in DNA. It is possible that it carries out the mismatch recognition step. This protein has a weak ATPase activity. The protein is DNA mismatch repair protein MutS of Rickettsia bellii (strain OSU 85-389).